The sequence spans 359 residues: DNA polymerase IV (359 aa).

A UmuC domain is found at 7–188; sequence IIHIDMDAFY…LPIGKFFGVG (182 aa). Residues D11 and D106 each coordinate Mg(2+). E107 is a catalytic residue.

This sequence belongs to the DNA polymerase type-Y family. Monomer. Mg(2+) serves as cofactor.

Its subcellular location is the cytoplasm. It catalyses the reaction DNA(n) + a 2'-deoxyribonucleoside 5'-triphosphate = DNA(n+1) + diphosphate. Its function is as follows. Poorly processive, error-prone DNA polymerase involved in untargeted mutagenesis. Copies undamaged DNA at stalled replication forks, which arise in vivo from mismatched or misaligned primer ends. These misaligned primers can be extended by PolIV. Exhibits no 3'-5' exonuclease (proofreading) activity. May be involved in translesional synthesis, in conjunction with the beta clamp from PolIII. The chain is DNA polymerase IV from Clostridium perfringens (strain SM101 / Type A).